The sequence spans 178 residues: N-alpha-acetyltransferase 80 (178 aa).

The region spanning 26–178 is the N-acetyltransferase domain; sequence VPIHNYPELM…AKKKYMKKVL (153 aa). Substrate contacts are provided by residues R48, 53 to 56, N88, and S98; that span reads RMRS. Residues 99 to 101 and 107 to 112 each bind acetyl-CoA; these read VVV and GQGFGK. Position 134 (S134) interacts with substrate. Acetyl-CoA is bound at residue Q138.

The protein belongs to the acetyltransferase family.

The enzyme catalyses N-terminal L-aspartyl-L-aspartyl-L-aspartyl-[protein] + acetyl-CoA = N-terminal N-acetyl-L-aspartyl-L-aspartyl-L-aspartyl-[protein] + CoA + H(+). It catalyses the reaction N-terminal L-glutamyl-L-glutamyl-L-glutamyl-[protein] + acetyl-CoA = N-terminal N-acetyl-L-glutamyl-L-glutamyl-L-glutamyl-[protein] + CoA + H(+). Functionally, N-alpha-acetyltransferase that acetylates the amino terminal acidic residue of proteins devoid of initiator methionine. Preferentially acts on proteins starting with Asp-Asp-Asp and Glu-Glu-Glu sequences. In vitro, shows high activity towards N-terminal sequences starting with Met-Asp-Glu-Leu, Met-Glu-Glu-Glu and Met-Asp-Asp-Asp. The sequence is that of N-alpha-acetyltransferase 80 from Drosophila melanogaster (Fruit fly).